The sequence spans 99 residues: DNA-directed RNA polymerase subunit omega (99 aa).

Residues 55 to 99 (EAGTVISDPNPEEKRERLRIEREERKRQREQEQKELENRLRDEKN) form a disordered region. Positions 65–99 (PEEKRERLRIEREERKRQREQEQKELENRLRDEKN) are enriched in basic and acidic residues.

It belongs to the RNA polymerase subunit omega family. In terms of assembly, the RNAP catalytic core consists of 2 alpha, 1 beta, 1 beta' and 1 omega subunit. When a sigma factor is associated with the core the holoenzyme is formed, which can initiate transcription.

It carries out the reaction RNA(n) + a ribonucleoside 5'-triphosphate = RNA(n+1) + diphosphate. In terms of biological role, promotes RNA polymerase assembly. Latches the N- and C-terminal regions of the beta' subunit thereby facilitating its interaction with the beta and alpha subunits. The chain is DNA-directed RNA polymerase subunit omega from Enterococcus faecalis (strain ATCC 700802 / V583).